Here is a 511-residue protein sequence, read N- to C-terminus: MSEYLLEMRNIGKEFNGVKALDGIYLKVRAGECVGLCGENGAGKSTLMKVLSGVYPHGTWTGEIFWEGKELKASGIRDTEAAGIVIIHQELMMVPHLSVAENIFLGCEPTTGGFIDYDQMNARAAELLARLKINDINVALPVYHYSGGKQQLIEIAKAINKNAKLLILDEPTSALTASETRVLIDLIKDFKKQGMACVYISHKLDEVAEISDTVTVIRDGAHIATRPMSELTTPDIITMMVGREMKNLFPREPHDIGEVMFEARNISCWDVTNPGRKVVDDVSFALRRGEILGIAGLVGAGRTELVSSLFGVWPGACQGQVFLEGKEIKIRTPRDAVRQGICMVPEDRKRDGILPIMPVGHNMTISVLDRFSLRGLIDKDAELVAIQREILRLKVKTADPMLAIASLSGGNQQKAVLSKMMLPDPKVLILDEPTRGVDVGAKYEIYKLIFALARQGVSILMVSSEMPEVLGISDRVLVIGEGKLRGDFPNENLTQEKVLAAAIGKPATNAA.

ABC transporter domains are found at residues 6–244 and 261–506; these read LEMR…VGRE and FEAR…IGKP. Residue 38–45 participates in ATP binding; it reads GENGAGKS.

This sequence belongs to the ABC transporter superfamily. Xylose importer (TC 3.A.1.2.4) family. As to quaternary structure, the complex is composed of two ATP-binding proteins (XylG), two transmembrane proteins (XylH) and a solute-binding protein (XylF).

Its subcellular location is the cell inner membrane. The enzyme catalyses D-xylose(out) + ATP + H2O = D-xylose(in) + ADP + phosphate + H(+). Part of the ABC transporter complex XylFGH involved in xylose import. Responsible for energy coupling to the transport system. The protein is Xylose import ATP-binding protein XylG of Brucella abortus (strain 2308).